A 291-amino-acid chain; its full sequence is Acetyl-coenzyme A carboxylase carboxyl transferase subunit beta (291 aa).

One can recognise a CoA carboxyltransferase N-terminal domain in the interval 34–291; it reads MWTKCSNCNN…LILHGVNKYE (258 aa). 4 residues coordinate Zn(2+): Cys38, Cys41, Cys57, and Cys60. The C4-type zinc-finger motif lies at 38-60; the sequence is CSNCNNMIYYEDLENNKYVCTKC.

It belongs to the AccD/PCCB family. Acetyl-CoA carboxylase is a heterohexamer composed of biotin carboxyl carrier protein (AccB), biotin carboxylase (AccC) and two subunits each of ACCase subunit alpha (AccA) and ACCase subunit beta (AccD). Zn(2+) serves as cofactor.

The protein localises to the cytoplasm. The enzyme catalyses N(6)-carboxybiotinyl-L-lysyl-[protein] + acetyl-CoA = N(6)-biotinyl-L-lysyl-[protein] + malonyl-CoA. The protein operates within lipid metabolism; malonyl-CoA biosynthesis; malonyl-CoA from acetyl-CoA: step 1/1. Component of the acetyl coenzyme A carboxylase (ACC) complex. Biotin carboxylase (BC) catalyzes the carboxylation of biotin on its carrier protein (BCCP) and then the CO(2) group is transferred by the transcarboxylase to acetyl-CoA to form malonyl-CoA. This Clostridium botulinum (strain Eklund 17B / Type B) protein is Acetyl-coenzyme A carboxylase carboxyl transferase subunit beta.